Consider the following 2282-residue polypeptide: Protein Ycf2 (2282 aa).

ATP is bound at residue 1637–1644 (GSIGTGRS).

It belongs to the Ycf2 family.

Its subcellular location is the plastid. The protein resides in the chloroplast stroma. Its function is as follows. Probable ATPase of unknown function. Its presence in a non-photosynthetic plant (Epifagus virginiana) and experiments in tobacco indicate that it has an essential function which is probably not related to photosynthesis. This is Protein Ycf2 from Citrus sinensis (Sweet orange).